The sequence spans 214 residues: UBX domain-containing protein 10 (214 aa).

The span at 1-13 (MHVTRPKSSKGRS) shows a compositional bias: basic residues. A disordered region spans residues 1-79 (MHVTRPKSSK…AYDRPPEEPV (79 aa)). Over residues 16-25 (MITNSSMIYT) the composition is skewed to polar residues. The span at 49-60 (SLRSRAILRRSS) shows a compositional bias: low complexity. The UBX domain maps to 127–204 (PEESDLLLAI…GVLNKSVLCI (78 aa)).

It belongs to the UBXN10 family.

The protein resides in the cell projection. It localises to the cilium. Its function is as follows. Required for ciliogenesis. Acts as a tethering factor that facilitates recruitment of vcp/p97 to the intraflagellar transport complex B (IFT-B) in cilia. In Danio rerio (Zebrafish), this protein is UBX domain-containing protein 10.